Consider the following 380-residue polypeptide: tRNA-specific 2-thiouridylase MnmA (380 aa).

ATP contacts are provided by residues 12–19 and M38; that span reads GLSGGVDS. Residues 108–110 form an interaction with target base in tRNA region; sequence NPD. C113 serves as the catalytic Nucleophile. A disulfide bond links C113 and C210. Position 138 (G138) interacts with ATP. The interval 160–162 is interaction with tRNA; sequence KDQ. The Cysteine persulfide intermediate role is filled by C210.

The protein belongs to the MnmA/TRMU family.

The protein resides in the cytoplasm. The catalysed reaction is S-sulfanyl-L-cysteinyl-[protein] + uridine(34) in tRNA + AH2 + ATP = 2-thiouridine(34) in tRNA + L-cysteinyl-[protein] + A + AMP + diphosphate + H(+). Catalyzes the 2-thiolation of uridine at the wobble position (U34) of tRNA, leading to the formation of s(2)U34. This is tRNA-specific 2-thiouridylase MnmA from Ureaplasma urealyticum serovar 10 (strain ATCC 33699 / Western).